A 434-amino-acid chain; its full sequence is Xylose isomerase (434 aa).

Catalysis depends on residues histidine 99 and aspartate 102. Residues glutamate 230, glutamate 266, histidine 269, aspartate 294, aspartate 305, aspartate 307, and aspartate 337 each coordinate Mg(2+).

This sequence belongs to the xylose isomerase family. In terms of assembly, homotetramer. Mg(2+) is required as a cofactor.

It is found in the cytoplasm. It carries out the reaction alpha-D-xylose = alpha-D-xylulofuranose. This is Xylose isomerase from Dinoroseobacter shibae (strain DSM 16493 / NCIMB 14021 / DFL 12).